Reading from the N-terminus, the 293-residue chain is Glutamyl-Q tRNA(Asp) synthetase (293 aa).

L-glutamate-binding positions include 9–13 (RFAPS) and E45. Residues 12 to 22 (PSPSGSLHFGS) carry the 'HIGH' region motif. Residues C101, C103, Y115, and C119 each contribute to the Zn(2+) site. Y172 and R190 together coordinate L-glutamate. The 'KMSKS' region motif lies at 228–232 (KLSKQ). Residue K231 participates in ATP binding.

This sequence belongs to the class-I aminoacyl-tRNA synthetase family. GluQ subfamily. Zn(2+) is required as a cofactor.

Its function is as follows. Catalyzes the tRNA-independent activation of glutamate in presence of ATP and the subsequent transfer of glutamate onto a tRNA(Asp). Glutamate is transferred on the 2-amino-5-(4,5-dihydroxy-2-cyclopenten-1-yl) moiety of the queuosine in the wobble position of the QUC anticodon. The sequence is that of Glutamyl-Q tRNA(Asp) synthetase from Shewanella frigidimarina (strain NCIMB 400).